Reading from the N-terminus, the 187-residue chain is UPF0301 protein VC_0467 (187 aa).

The protein belongs to the UPF0301 (AlgH) family.

The chain is UPF0301 protein VC_0467 from Vibrio cholerae serotype O1 (strain ATCC 39315 / El Tor Inaba N16961).